Here is a 758-residue protein sequence, read N- to C-terminus: Vitamin K-dependent gamma-carboxylase (758 aa).

Residues M1–E29 are disordered. The residue at position 2 (A2) is an N-acetylalanine. Residues A2–D60 lie on the Cytoplasmic side of the membrane. The chain crosses the membrane as a helical span at residues P61–Q81. At E82 to D113 the chain is on the lumenal side. An intrachain disulfide couples C99 to C450. Residues W114–W134 form a helical membrane-spanning segment. The Cytoplasmic segment spans residues Y135 to R136. The helical transmembrane segment at L137–W157 threads the bilayer. The Lumenal segment spans residues N158–Q292. Residues L293–A313 form a helical membrane-spanning segment. At E314–H361 the chain is on the cytoplasmic side. Residues L362 to F382 form a helical membrane-spanning segment. At L383–L758 the chain is on the lumenal side. Residues P727–L758 are disordered. Positions S742 to L758 are enriched in basic and acidic residues.

The protein belongs to the vitamin K-dependent gamma-carboxylase family. In terms of assembly, monomer. Interacts with CALU.

It localises to the endoplasmic reticulum membrane. It carries out the reaction 4-carboxy-L-glutamyl-[protein] + 2,3-epoxyphylloquinone + H2O + H(+) = phylloquinol + L-glutamyl-[protein] + CO2 + O2. In terms of biological role, mediates the vitamin K-dependent carboxylation of glutamate residues to calcium-binding gamma-carboxyglutamate (Gla) residues with the concomitant conversion of the reduced hydroquinone form of vitamin K to vitamin K epoxide. Catalyzes gamma-carboxylation of various proteins, such as blood coagulation factors (F2, F7, F9 and F10), osteocalcin (BGLAP) or matrix Gla protein (MGP). This is Vitamin K-dependent gamma-carboxylase (Ggcx) from Rattus norvegicus (Rat).